A 663-amino-acid chain; its full sequence is Bifunctional polymyxin resistance protein ArnA (663 aa).

Residues Met-1–Leu-304 are formyltransferase ArnAFT. His-104 serves as the catalytic Proton donor; for formyltransferase activity. (6R)-10-formyltetrahydrofolate-binding positions include Arg-114 and Thr-136–Asp-140. The dehydrogenase ArnADH stretch occupies residues Arg-316–Asp-663. NAD(+) contacts are provided by residues Asp-349 and Asp-370–Ile-371. Residues Ala-395, Tyr-400, and Thr-434–Ser-435 contribute to the UDP-alpha-D-glucuronate site. Glu-436 serves as the catalytic Proton acceptor; for decarboxylase activity. UDP-alpha-D-glucuronate is bound by residues Arg-462, Asn-494, Gln-528–Arg-537, and Tyr-615. Catalysis depends on Arg-621, which acts as the Proton donor; for decarboxylase activity.

It in the N-terminal section; belongs to the Fmt family. UDP-L-Ara4N formyltransferase subfamily. This sequence in the C-terminal section; belongs to the NAD(P)-dependent epimerase/dehydratase family. UDP-glucuronic acid decarboxylase subfamily. As to quaternary structure, homohexamer, formed by a dimer of trimers.

It catalyses the reaction UDP-alpha-D-glucuronate + NAD(+) = UDP-beta-L-threo-pentopyranos-4-ulose + CO2 + NADH. The enzyme catalyses UDP-4-amino-4-deoxy-beta-L-arabinose + (6R)-10-formyltetrahydrofolate = UDP-4-deoxy-4-formamido-beta-L-arabinose + (6S)-5,6,7,8-tetrahydrofolate + H(+). The protein operates within nucleotide-sugar biosynthesis; UDP-4-deoxy-4-formamido-beta-L-arabinose biosynthesis; UDP-4-deoxy-4-formamido-beta-L-arabinose from UDP-alpha-D-glucuronate: step 1/3. Its pathway is nucleotide-sugar biosynthesis; UDP-4-deoxy-4-formamido-beta-L-arabinose biosynthesis; UDP-4-deoxy-4-formamido-beta-L-arabinose from UDP-alpha-D-glucuronate: step 3/3. It participates in bacterial outer membrane biogenesis; lipopolysaccharide biosynthesis. In terms of biological role, bifunctional enzyme that catalyzes the oxidative decarboxylation of UDP-glucuronic acid (UDP-GlcUA) to UDP-4-keto-arabinose (UDP-Ara4O) and the addition of a formyl group to UDP-4-amino-4-deoxy-L-arabinose (UDP-L-Ara4N) to form UDP-L-4-formamido-arabinose (UDP-L-Ara4FN). The modified arabinose is attached to lipid A and is required for resistance to polymyxin and cationic antimicrobial peptides. The protein is Bifunctional polymyxin resistance protein ArnA of Aeromonas salmonicida (strain A449).